A 460-amino-acid chain; its full sequence is Beta-1,3-xylanase TXYA (460 aa).

The N-terminal stretch at 1–22 (MKKLAKMISVATLGACAFQAHA) is a signal peptide. The GH26 domain occupies 23–337 (LDGKLVPDQG…LSDPKFIRHS (315 aa)). The active-site Proton donor is the Glu138. Residue Glu234 is the Nucleophile of the active site. A disordered region spans residues 347-371 (GNSDGGNGGDNGGDNGGDNGGETPE). Gly residues predominate over residues 348–366 (NSDGGNGGDNGGDNGGDNG). A carbohydrate binding module (CBM) region spans residues 368 to 460 (ETPENCTDDF…TVTFTNQVCN (93 aa)). Intrachain disulfides connect Cys373/Cys459 and Cys404/Cys409.

It belongs to the glycosyl hydrolase 26 family.

It carries out the reaction Random hydrolysis of (1-&gt;3)-beta-D-glycosidic linkages in (1-&gt;3)-beta-D-xylans.. Its activity is regulated as follows. Completely inhibited by Cu(2+), Hg(2+) and N-bromosuccinimide. Strongly inhibited by Ag(+), Zn(2+) and Pb(2+). Moderately inhibited by Fe(3+), Al(3+), Mn(2+), dithiothreitol and p-chloromercuribenzoic acid. Slightly activated by Mg(2+) and Ca(2+). Unaffected by Na(+), K(+), Ba(2+), EDTA, iodoacetic acid and N-ethylmalaimide. Functionally, catalyzes the hydrolysis of beta-1,3-xylan into oligosaccharides, mainly xylotriose and xylobiose with smaller amounts of xylotetraose, xylose, xylopentaose and xylohexaose. Weakly active toward beta-1,3-xylotriose, yielding xylose and xylobiose. Converts beta-1,3-xylotetraose into xylotriose, xylobiose and xylose. Converts beta-1,3-xylopentaose into xylotetraose, xylotriose, xylobiose and xylose. Does not hydrolyze xylobiose, p-nitrophenyl-beta-xyloside, beta-1,4-xylan, curdlan or carboxymethylcellulose. The sequence is that of Beta-1,3-xylanase TXYA from Vibrio sp.